The sequence spans 215 residues: 3-demethoxyubiquinol 3-hydroxylase (215 aa).

Positions 26–47 (PSSAHSQRPSPAVVQPEHKMSE) are disordered. Fe cation is bound by residues Glu64, Glu94, His97, Glu146, Glu178, and His181.

This sequence belongs to the COQ7 family. Requires Fe cation as cofactor.

It is found in the cell membrane. The catalysed reaction is a 5-methoxy-2-methyl-3-(all-trans-polyprenyl)benzene-1,4-diol + AH2 + O2 = a 3-demethylubiquinol + A + H2O. It participates in cofactor biosynthesis; ubiquinone biosynthesis. Its function is as follows. Catalyzes the hydroxylation of 2-nonaprenyl-3-methyl-6-methoxy-1,4-benzoquinol during ubiquinone biosynthesis. The chain is 3-demethoxyubiquinol 3-hydroxylase from Pseudomonas syringae pv. syringae (strain B728a).